Reading from the N-terminus, the 587-residue chain is MFRSHTCGELRLSDAGKSVTLAGWVQRARKMGGMTFVDLRDRYGITQLVFNEAVNAELCERANHLGREFVIQITGEVNERSNKNMNIPTGEIEIIVSVLNVLNSAVTPPFTIEDNSDGGDDIRMKFRYLDLRRNCVRKNLELRHKMTMEVRRYLDSKGFLEVETPMLVGSTPEGARDFVVPSRMNPGQFYALPQSPQTLKQLLMVSGFDRYFQIVKCFRDEDLRADRQPEFTQIDCEMSFVEQEDIISTFEGMAKHLFKELRGVELSEPFLRMTWADAIKYYGSDKPDLRFGMKFVELMDIMKGHGFSVFDDAAYIGGICAEGAASYTRKQLDQLTEFVKKPQIGAKGMVYARVEADGNVKSSVDKFYSQEVLQQMKEAFSAKPGDLILILSGPDAMKTRKQLCELRLEVGRQLGLRDKNKFACLWVVDFPMFEWSEEEGRLMAMHHPFTHPKEEDIPLLDTDPAAVRADAYDMVVNGVEVGGGSIRIHDSQLQAKMFEILGFTPERAQEQFGFLMNAFKYGAPPHGGLAYGLDRWVSLFAGLDSIRDCIAFPKNNSGRDVMLDAPAALDQSQLDELNLVVDIKEDK.

Glu-173 serves as a coordination point for L-aspartate. Positions 197–200 (QTLK) are aspartate. Residue Arg-219 coordinates L-aspartate. ATP-binding positions include 219–221 (RDE) and Gln-228. L-aspartate is bound at residue His-446. Glu-480 provides a ligand contact to ATP. L-aspartate is bound at residue Arg-487. Residue 532 to 535 (GLDR) participates in ATP binding.

The protein belongs to the class-II aminoacyl-tRNA synthetase family. Type 1 subfamily. Homodimer.

The protein localises to the cytoplasm. It catalyses the reaction tRNA(Asp) + L-aspartate + ATP = L-aspartyl-tRNA(Asp) + AMP + diphosphate. Catalyzes the attachment of L-aspartate to tRNA(Asp) in a two-step reaction: L-aspartate is first activated by ATP to form Asp-AMP and then transferred to the acceptor end of tRNA(Asp). This Phocaeicola vulgatus (strain ATCC 8482 / DSM 1447 / JCM 5826 / CCUG 4940 / NBRC 14291 / NCTC 11154) (Bacteroides vulgatus) protein is Aspartate--tRNA ligase.